We begin with the raw amino-acid sequence, 455 residues long: N-acetyl-S-(2-succino)cysteine lyase (455 aa).

106–107 provides a ligand contact to fumarate; that stretch reads TT. His154 (proton donor/acceptor) is an active-site residue. Residue Arg233 coordinates fumarate. The active-site Proton donor/acceptor is the Ser277. Residues Ser278 and 283–285 each bind fumarate; that span reads KRN.

The protein belongs to the lyase 1 family.

It catalyses the reaction N-acetyl-S-(2-succino)-L-cysteine = N-acetyl-L-cysteine + fumarate. It participates in amino-acid biosynthesis; L-cysteine biosynthesis. In terms of biological role, catalyzes the cleavage of N-acetyl-S-(2-succino)cysteine into fumarate and N-acetylcysteine. Is involved in a S-(2-succino)cysteine (2SC) degradation pathway that allows the bacterium to recover cysteine from 2SC and to detoxify 2SC that may be a toxic metabolite. Can also perform the reverse reaction in vitro, and has minor activity against 2SC and other small molecule thiols. The protein is N-acetyl-S-(2-succino)cysteine lyase of Enterococcus italicus (strain DSM 15952 / CCUG 50447 / LMG 22039 / TP 1.5).